The primary structure comprises 965 residues: Probable serine/threonine-protein kinase DDB_G0291516 (965 aa).

The tract at residues Lys-114–Lys-170 is disordered. 2 stretches are compositionally biased toward low complexity: residues Glu-119–Leu-136 and Ala-144–Gln-155. Residues Pro-156–Gln-168 show a composition bias toward pro residues. 2 ANK repeats span residues Lys-271 to Ile-301 and Leu-310 to Met-339. The region spanning Ile-459 to Leu-739 is the Protein kinase domain. ATP is bound by residues Ile-465–Val-473 and Lys-486. Asp-587 (proton acceptor) is an active-site residue. The helical transmembrane segment at Ile-653–Ile-673 threads the bilayer. N-linked (GlcNAc...) asparagine glycosylation is found at Asn-760, Asn-765, Asn-905, Asn-909, Asn-910, Asn-914, Asn-934, and Asn-938. Over residues Asn-881–Ser-940 the composition is skewed to low complexity. The segment at Asn-881–Lys-942 is disordered.

Belongs to the protein kinase superfamily. Ser/Thr protein kinase family.

The protein resides in the membrane. It catalyses the reaction L-seryl-[protein] + ATP = O-phospho-L-seryl-[protein] + ADP + H(+). The enzyme catalyses L-threonyl-[protein] + ATP = O-phospho-L-threonyl-[protein] + ADP + H(+). The polypeptide is Probable serine/threonine-protein kinase DDB_G0291516 (Dictyostelium discoideum (Social amoeba)).